The chain runs to 248 residues: Small ribosomal subunit protein uS3 (248 aa).

Residues 38–106 form the KH type-2 domain; the sequence is VREYLVKTLD…QVALNILEVK (69 aa). Residues 213 to 230 are compositionally biased toward basic and acidic residues; the sequence is ESEINAPAERRGRGDRNG. The interval 213 to 248 is disordered; sequence ESEINAPAERRGRGDRNGRPRRGGQRRQRSEQKQEG.

Belongs to the universal ribosomal protein uS3 family. As to quaternary structure, part of the 30S ribosomal subunit. Forms a tight complex with proteins S10 and S14.

In terms of biological role, binds the lower part of the 30S subunit head. Binds mRNA in the 70S ribosome, positioning it for translation. The chain is Small ribosomal subunit protein uS3 from Corynebacterium diphtheriae (strain ATCC 700971 / NCTC 13129 / Biotype gravis).